The following is a 51-amino-acid chain: Magnetosome protein Mms5 (51 aa).

Residues 1–12 (MLSAKGVSLGLG) lie on the Lumenal side of the membrane. The tract at residues 9–16 (LGLGLGLG) is LG region. The helical transmembrane segment at 13–33 (LGLGAWGPVLLGVVGVAGAIA) threads the bilayer. Over 34–51 (LYGYYKNRNAEPAAAEAV) the chain is Cytoplasmic.

This sequence belongs to the magnetosome MamD/Mms5 family. In terms of processing, seen in gels as a band of about 5 kDa, with an N-terminus that corresponds to residue 8, suggesting it may undergo N-terminal cleavage.

The protein resides in the magnetosome membrane. Its function is as follows. Might be involved in magnetite crystal growth. This is Magnetosome protein Mms5 from Paramagnetospirillum magneticum (strain ATCC 700264 / AMB-1) (Magnetospirillum magneticum).